The following is a 65-amino-acid chain: Conotoxin Cal1.5 (65 aa).

An N-terminal signal peptide occupies residues 1-18 (MRCLPVFIILLLLASTAA). Positions 19–49 (VDVAGSKLKRRLERKPYQGSQAYVKKTAFGL) are excised as a propeptide. Intrachain disulfides connect Cys-52–Cys-62 and Cys-53–Cys-59. At Pro-61 the chain carries 4-hydroxyproline.

It belongs to the conotoxin T superfamily. Expressed by the venom duct.

It localises to the secreted. Probable neurotoxin with unknown target. Possibly targets ion channels. This Californiconus californicus (California cone) protein is Conotoxin Cal1.5.